Consider the following 199-residue polypeptide: Superoxide dismutase [Mn/Fe] 2 (199 aa).

His-27, His-81, Asp-161, and His-165 together coordinate Fe(3+). Mn(2+) is bound by residues His-27, His-81, Asp-161, and His-165.

Belongs to the iron/manganese superoxide dismutase family. Homodimer. Can also form a heterodimer with SodA. Mn(2+) is required as a cofactor. The cofactor is Fe(3+).

It catalyses the reaction 2 superoxide + 2 H(+) = H2O2 + O2. Destroys superoxide anion radicals which are normally produced within the cells and which are toxic to biological systems. Catalyzes the dismutation of superoxide anion radicals into O2 and H2O2 by successive reduction and oxidation of the transition metal ion at the active site. The sequence is that of Superoxide dismutase [Mn/Fe] 2 (sodM) from Staphylococcus aureus (strain bovine RF122 / ET3-1).